Reading from the N-terminus, the 31-residue chain is Cytochrome b6-f complex subunit 6 (31 aa).

A helical transmembrane segment spans residues 4 to 24 (LISYISLLAGFVIIASVFYLA).

This sequence belongs to the PetL family. The 4 large subunits of the cytochrome b6-f complex are cytochrome b6, subunit IV (17 kDa polypeptide, PetD), cytochrome f and the Rieske protein, while the 4 small subunits are PetG, PetL, PetM and PetN. The complex functions as a dimer.

It is found in the plastid. Its subcellular location is the chloroplast thylakoid membrane. Functionally, component of the cytochrome b6-f complex, which mediates electron transfer between photosystem II (PSII) and photosystem I (PSI), cyclic electron flow around PSI, and state transitions. PetL is important for photoautotrophic growth as well as for electron transfer efficiency and stability of the cytochrome b6-f complex. This chain is Cytochrome b6-f complex subunit 6, found in Tupiella akineta (Green alga).